The chain runs to 614 residues: Deoxynucleoside triphosphate triphosphohydrolase SAMHD1 (614 aa).

Residues 1 to 13 (MGSPAAGWGAAPA) show a composition bias toward low complexity. The tract at residues 1 to 33 (MGSPAAGWGAAPAKRARREGSAESSCGSPADRD) is disordered. Residues 37–102 (WDTERLCQHL…LACLNQLRQT (66 aa)) form the SAM domain. Lys-107 and Val-108 together coordinate GTP. Asn-110 lines the dGTP pocket. Positions 128, 133, and 136 each coordinate GTP. DGTP-binding residues include Gln-140, Leu-141, Val-147, and Arg-155. Residue Gln-140 coordinates dATP. Gln-140 lines the dCTP pocket. Gln-140 contributes to the dTTP binding site. Position 155 (Arg-155) interacts with dATP. DCTP is bound at residue Arg-155. Arg-155 lines the dTTP pocket. The 153-residue stretch at 155-307 (RFEHSLGVGY…GIDVDKWDYF (153 aa)) folds into the HD domain. Mn(2+) is bound by residues His-158, His-197, and Asp-198. The dATP site is built by His-201 and His-206. His-201 and His-206 together coordinate dCTP. Residues His-201 and His-206 each contribute to the dTTP site. His-224 is a catalytic residue. Position 302 (Asp-302) interacts with Mn(2+). Residues Lys-303, Tyr-306, Asp-310, Arg-324, Arg-343, Lys-345, Asn-349, Arg-357, Tyr-365, Gln-366, His-367, and Lys-368 each coordinate dGTP. Positions 303, 306, and 310 each coordinate dATP. Lys-303, Tyr-306, and Asp-310 together coordinate dCTP. Lys-303, Tyr-306, and Asp-310 together coordinate dTTP. Residue Arg-357 coordinates dATP. Arg-357 serves as a coordination point for dCTP. Gln-366 is a binding site for dATP. Gln-366 is a dCTP binding site. Gln-366 serves as a coordination point for dTTP. Arg-442, Lys-446, and Lys-515 together coordinate GTP. Lys-515 contributes to the dGTP binding site.

Belongs to the SAMHD1 family. In terms of assembly, homodimer; in absence of GTP and dNTP. Homotetramer; in GTP- and dNTP-bound form. Interacts with rbbp8/CtIP. It depends on Zn(2+) as a cofactor.

It is found in the nucleus. The protein localises to the chromosome. It catalyses the reaction a 2'-deoxyribonucleoside 5'-triphosphate + H2O = a 2'-deoxyribonucleoside + triphosphate + H(+). The enzyme catalyses dATP + H2O = 2'-deoxyadenosine + triphosphate + H(+). The catalysed reaction is dCTP + H2O = 2'-deoxycytidine + triphosphate + H(+). It carries out the reaction dGTP + H2O = 2'-deoxyguanosine + triphosphate + H(+). It catalyses the reaction dTTP + H2O = thymidine + triphosphate + H(+). With respect to regulation, allosterically activated and regulated via the combined actions of GTP and dNTPs (dATP, dGTP, dTTP and dCTP): Allosteric site 1 binds GTP, while allosteric site 2 binds dNTP. Allosteric activation promotes the formation of highly active homotetramers. In terms of biological role, protein that acts both as a host restriction factor involved in defense response to virus and as a regulator of DNA end resection at stalled replication forks. Has deoxynucleoside triphosphate (dNTPase) activity, which is required to restrict infection by viruses: dNTPase activity reduces cellular dNTP levels to levels too low for retroviral reverse transcription to occur, blocking early-stage virus replication in dendritic and other myeloid cells. Functions during S phase at stalled DNA replication forks to promote the resection of gapped or reversed forks: acts by stimulating the exonuclease activity of MRE11, activating the ATR-CHK1 pathway and allowing the forks to restart replication. Its ability to promote degradation of nascent DNA at stalled replication forks is required to prevent induction of type I interferons, thereby preventing chronic inflammation. Ability to promote DNA end resection at stalled replication forks is independent of dNTPase activity. The sequence is that of Deoxynucleoside triphosphate triphosphohydrolase SAMHD1 from Gallus gallus (Chicken).